The sequence spans 261 residues: Succinate dehydrogenase [ubiquinone] iron-sulfur subunit, mitochondrial (261 aa).

A 2Fe-2S ferredoxin-type domain is found at 31–122 (FKIYRWNPDT…DVKIYPLPHM (92 aa)). [2Fe-2S] cluster contacts are provided by C82, C87, C90, and C102. The 4Fe-4S ferredoxin-type domain occupies 164–194 (DRKKLDGLYECILCACCSTACPSYWWNNEQY). The [4Fe-4S] cluster site is built by C174, C177, and C180. C184 is a [3Fe-4S] cluster binding site. A ubiquinone is bound at residue W189. Residues C231 and C237 each coordinate [3Fe-4S] cluster. [4Fe-4S] cluster is bound at residue C241.

This sequence belongs to the succinate dehydrogenase/fumarate reductase iron-sulfur protein family. As to quaternary structure, component of complex II composed of four subunits: a flavoprotein (FP), an iron-sulfur protein (IP), and a cytochrome b composed of a large and a small subunit. It depends on [2Fe-2S] cluster as a cofactor. Requires [3Fe-4S] cluster as cofactor. [4Fe-4S] cluster is required as a cofactor.

The protein resides in the mitochondrion inner membrane. It carries out the reaction a quinone + succinate = fumarate + a quinol. It participates in carbohydrate metabolism; tricarboxylic acid cycle; fumarate from succinate (eukaryal route): step 1/1. In terms of biological role, iron-sulfur protein (IP) subunit of succinate dehydrogenase (SDH) that is involved in complex II of the mitochondrial electron transport chain and is responsible for transferring electrons from succinate to ubiquinone (coenzyme Q). The polypeptide is Succinate dehydrogenase [ubiquinone] iron-sulfur subunit, mitochondrial (SDH2) (Eremothecium gossypii (strain ATCC 10895 / CBS 109.51 / FGSC 9923 / NRRL Y-1056) (Yeast)).